Reading from the N-terminus, the 244-residue chain is Small ribosomal subunit protein uS3 (244 aa).

One can recognise a KH type-2 domain in the interval 39–107; sequence MRKFVMSELK…ETHLNIVEVR (69 aa). Residues 214–244 are disordered; the sequence is ASERRALEGDAQGPASRERDRGDRRRERDNA. Residues 229–244 are compositionally biased toward basic and acidic residues; the sequence is SRERDRGDRRRERDNA.

This sequence belongs to the universal ribosomal protein uS3 family. Part of the 30S ribosomal subunit. Forms a tight complex with proteins S10 and S14.

Its function is as follows. Binds the lower part of the 30S subunit head. Binds mRNA in the 70S ribosome, positioning it for translation. The polypeptide is Small ribosomal subunit protein uS3 (Rhizobium etli (strain CIAT 652)).